A 439-amino-acid polypeptide reads, in one-letter code: Thymidine phosphorylase (439 aa).

The protein belongs to the thymidine/pyrimidine-nucleoside phosphorylase family. Homodimer.

The catalysed reaction is thymidine + phosphate = 2-deoxy-alpha-D-ribose 1-phosphate + thymine. The protein operates within pyrimidine metabolism; dTMP biosynthesis via salvage pathway; dTMP from thymine: step 1/2. Its function is as follows. The enzymes which catalyze the reversible phosphorolysis of pyrimidine nucleosides are involved in the degradation of these compounds and in their utilization as carbon and energy sources, or in the rescue of pyrimidine bases for nucleotide synthesis. The sequence is that of Thymidine phosphorylase from Mesorhizobium japonicum (strain LMG 29417 / CECT 9101 / MAFF 303099) (Mesorhizobium loti (strain MAFF 303099)).